Reading from the N-terminus, the 54-residue chain is Ovomucoid (54 aa).

The 51-residue stretch at 4–54 folds into the Kazal-like domain; sequence VDCSDYPKPVCSPENMPVCGSDSKTYSNKCDFCNAVADSNGTLTLSHFGKC. Cystine bridges form between C6–C36, C14–C33, and C22–C54. N-linked (GlcNAc...) asparagine glycosylation occurs at N43.

It is found in the secreted. This Nycticorax nycticorax (Black-crowned night-heron) protein is Ovomucoid.